The sequence spans 209 residues: Uracil phosphoribosyltransferase (209 aa).

Residues Arg77, Arg102, and 129–137 contribute to the 5-phospho-alpha-D-ribose 1-diphosphate site; that span reads DPMLATGVS. Residues Ile192 and 197–199 contribute to the uracil site; that span reads GDA. Asp198 is a 5-phospho-alpha-D-ribose 1-diphosphate binding site.

It belongs to the UPRTase family. Requires Mg(2+) as cofactor.

The catalysed reaction is UMP + diphosphate = 5-phospho-alpha-D-ribose 1-diphosphate + uracil. Its pathway is pyrimidine metabolism; UMP biosynthesis via salvage pathway; UMP from uracil: step 1/1. With respect to regulation, allosterically activated by GTP. In terms of biological role, catalyzes the conversion of uracil and 5-phospho-alpha-D-ribose 1-diphosphate (PRPP) to UMP and diphosphate. The polypeptide is Uracil phosphoribosyltransferase (Metamycoplasma arthritidis (strain 158L3-1) (Mycoplasma arthritidis)).